The sequence spans 541 residues: Light-independent protochlorophyllide reductase subunit B (541 aa).

Position 36 (D36) interacts with [4Fe-4S] cluster. Residue D290 is the Proton donor of the active site. G425–L426 lines the substrate pocket.

Belongs to the ChlB/BchB/BchZ family. As to quaternary structure, protochlorophyllide reductase is composed of three subunits; ChlL, ChlN and ChlB. Forms a heterotetramer of two ChlB and two ChlN subunits. The cofactor is [4Fe-4S] cluster.

The catalysed reaction is chlorophyllide a + oxidized 2[4Fe-4S]-[ferredoxin] + 2 ADP + 2 phosphate = protochlorophyllide a + reduced 2[4Fe-4S]-[ferredoxin] + 2 ATP + 2 H2O. It functions in the pathway porphyrin-containing compound metabolism; chlorophyll biosynthesis (light-independent). Functionally, component of the dark-operative protochlorophyllide reductase (DPOR) that uses Mg-ATP and reduced ferredoxin to reduce ring D of protochlorophyllide (Pchlide) to form chlorophyllide a (Chlide). This reaction is light-independent. The NB-protein (ChlN-ChlB) is the catalytic component of the complex. This is Light-independent protochlorophyllide reductase subunit B from Synechococcus sp. (strain CC9902).